An 885-amino-acid chain; its full sequence is Protein PTHB1 (885 aa).

Positions Met-1–Gln-406 are seven-bladed beta-propeller. The segment at Arg-684–Glu-764 is interaction with LZTL1.

Part of BBSome complex, that contains BBS1, BBS2, BBS4, BBS5, BBS7, BBS8/TTC8, BBS9 and BBIP10. Interacts with LZTL1; the interaction mediates the association of LZTL1 with the BBsome complex and regulates BBSome ciliary trafficking.

It localises to the cell projection. Its subcellular location is the cilium membrane. The protein resides in the cytoplasm. It is found in the cytoskeleton. The protein localises to the microtubule organizing center. It localises to the centrosome. Its subcellular location is the centriolar satellite. Functionally, the BBSome complex is thought to function as a coat complex required for sorting of specific membrane proteins to the primary cilia. The BBSome complex is required for ciliogenesis but is dispensable for centriolar satellite function. This ciliogenic function is mediated in part by the Rab8 GDP/GTP exchange factor, which localizes to the basal body and contacts the BBSome. Rab8(GTP) enters the primary cilium and promotes extension of the ciliary membrane. Firstly the BBSome associates with the ciliary membrane and binds to RAB3IP/Rabin8, the guanosyl exchange factor (GEF) for Rab8 and then the Rab8-GTP localizes to the cilium and promotes docking and fusion of carrier vesicles to the base of the ciliary membrane. Required for proper BBSome complex assembly and its ciliary localization. This chain is Protein PTHB1 (Bbs9), found in Mus musculus (Mouse).